We begin with the raw amino-acid sequence, 296 residues long: Nucleotide-binding protein M6_Spy0559 (296 aa).

13–20 serves as a coordination point for ATP; it reads GMSGAGKT. Position 63 to 66 (63 to 66) interacts with GTP; the sequence is DMRS.

The protein belongs to the RapZ-like family.

In terms of biological role, displays ATPase and GTPase activities. This chain is Nucleotide-binding protein M6_Spy0559, found in Streptococcus pyogenes serotype M6 (strain ATCC BAA-946 / MGAS10394).